Reading from the N-terminus, the 367-residue chain is Probable peptidoglycan glycosyltransferase FtsW (367 aa).

The next 9 membrane-spanning stretches (helical) occupy residues 32–52, 57–77, 87–107, 119–139, 149–169, 171–191, 251–271, 296–316, and 323–343; these read LIFILIGLFAMAFTFLMPMKF, AFWGYCICFLLLALVLVPGIG, IPIGPFNFQPSEFAKLTMIVF, IHGLKGFLPIIIYLGIICFLL, MVVVAIVMSILLLGGLGFALF, LLFLSAVLLVIAAILTAPWRM, VVGEELGFVGIFFVILLFVLL, GVVVWFGVQAIVNLGVCFGVF, and LPFISYGGSSIVISLMAFGLL.

This sequence belongs to the SEDS family. FtsW subfamily.

The protein resides in the cell inner membrane. It catalyses the reaction [GlcNAc-(1-&gt;4)-Mur2Ac(oyl-L-Ala-gamma-D-Glu-L-Lys-D-Ala-D-Ala)](n)-di-trans,octa-cis-undecaprenyl diphosphate + beta-D-GlcNAc-(1-&gt;4)-Mur2Ac(oyl-L-Ala-gamma-D-Glu-L-Lys-D-Ala-D-Ala)-di-trans,octa-cis-undecaprenyl diphosphate = [GlcNAc-(1-&gt;4)-Mur2Ac(oyl-L-Ala-gamma-D-Glu-L-Lys-D-Ala-D-Ala)](n+1)-di-trans,octa-cis-undecaprenyl diphosphate + di-trans,octa-cis-undecaprenyl diphosphate + H(+). The protein operates within cell wall biogenesis; peptidoglycan biosynthesis. In terms of biological role, peptidoglycan polymerase that is essential for cell division. The sequence is that of Probable peptidoglycan glycosyltransferase FtsW from Taylorella equigenitalis (strain MCE9).